Here is a 61-residue protein sequence, read N- to C-terminus: Small ribosomal subunit protein uS14 (61 aa).

The Zn(2+) site is built by cysteine 24, cysteine 27, cysteine 40, and cysteine 43.

Belongs to the universal ribosomal protein uS14 family. Zinc-binding uS14 subfamily. In terms of assembly, part of the 30S ribosomal subunit. Contacts proteins S3 and S10. Zn(2+) serves as cofactor.

Its function is as follows. Binds 16S rRNA, required for the assembly of 30S particles and may also be responsible for determining the conformation of the 16S rRNA at the A site. This chain is Small ribosomal subunit protein uS14, found in Clostridium beijerinckii (strain ATCC 51743 / NCIMB 8052) (Clostridium acetobutylicum).